A 470-amino-acid polypeptide reads, in one-letter code: MTDDVDTHIHEKFDLQKRLGKGAYGIVWKAYDKRSRETVALKKIFDAFRNPTDSQRTFREVMFLQEFGKHPNVIKLYNIFRADNDRDIYLAFEFMEADLHNVIKKGSILKDVHKQYIMCQLFRAIRFLHSGNVLHRDLKPSNVLLDADCRVKLADFGLARSLSSLEDYPEGQKMPDLTEYVATRWYRSPEILLAAKRYTKGVDMWSLGCILAEMLIGRALFPGSSTINQIERIMNTIAKPSRADIASIGSHYAASVLEKMPQRPRKPLDLIITQSQTAAIDMVQRLLIFAPQKRLTVEQCLVHPYVVQFHNPSEEPVLNYEVYPPLPDHIQLSIDDYRDRLYEMIDEKKASFKRIQHEKIRPYGEDKSRAPIAQAECSDTDYDTARSLQRTTSMDKNNSSSHDSSSGTLRERAASAESRTSKDSNGEMRNGNGNTPSSIKQRRRSVERARLFANIKPSKILHPHKLISNY.

Positions 13–306 constitute a Protein kinase domain; the sequence is FDLQKRLGKG…VEQCLVHPYV (294 aa). Residues 19-27 and Lys-42 each bind ATP; that span reads LGKGAYGIV. The Proton acceptor role is filled by Asp-137. At Thr-178 the chain carries Phosphothreonine. Residues 178–180 carry the TXY motif; sequence TEY. Tyr-180 carries the phosphotyrosine modification. A disordered region spans residues 362 to 445; the sequence is PYGEDKSRAP…PSSIKQRRRS (84 aa). Over residues 394-406 the composition is skewed to low complexity; that stretch reads MDKNNSSSHDSSS. Basic and acidic residues predominate over residues 409–426; it reads LRERAASAESRTSKDSNG.

The protein belongs to the protein kinase superfamily. CMGC Ser/Thr protein kinase family. MAP kinase subfamily. Requires Mg(2+) as cofactor. Post-translationally, dually phosphorylated on Thr-178 and Tyr-180, which activates the enzyme. Expressed in the URX neuron and in many other head sensory neurons. Isoform a: Expressed in head and tail ciliated sensory neurons, and in mid-body neurons. Isoform c: Expressed in head and tail ciliated sensory neurons, and in mid-body neurons.

The protein resides in the cell projection. The protein localises to the cilium. It is found in the cilium membrane. It localises to the cytoplasm. Its subcellular location is the cytoskeleton. The protein resides in the cilium axoneme. The protein localises to the cilium basal body. It is found in the cell junction. It localises to the perikaryon. Its subcellular location is the dendrite. The enzyme catalyses L-seryl-[protein] + ATP = O-phospho-L-seryl-[protein] + ADP + H(+). The catalysed reaction is L-threonyl-[protein] + ATP = O-phospho-L-threonyl-[protein] + ADP + H(+). Activated by threonine and tyrosine phosphorylation. In terms of biological role, atypical MAPK protein. Regulates primary cilium formation in sensory neurons and the localization of ciliary proteins involved in cilium structure, transport, and signaling. Acts in dopamine (DA) neurons to support synaptic membrane dat-1 availability via activation of rho-1 thereby sustaining normal levels of DA clearance. Plays a role in male mating behavior, probably in part through regulating the localization of the polycystin pkd-2. Functions postembryonically in the URX sensory neurons to constrain URX dendrite growth throughout lifetime, probably by restricting expansion of the subcellular sensory compartment at the dendrite ending. The polypeptide is Mitogen-activated protein kinase 15 (Caenorhabditis elegans).